Reading from the N-terminus, the 491-residue chain is Ribulose-1,5 bisphosphate carboxylase/oxygenase large subunit N-methyltransferase, chloroplastic (491 aa).

Residues 67-291 (EGVVTTKTPV…AGDQLFIQYD (225 aa)) enclose the SET domain.

This sequence belongs to the class V-like SAM-binding methyltransferase superfamily. Plant protein-lysine LSMT methyltransferase family.

The protein localises to the plastid. The protein resides in the chloroplast. It catalyses the reaction L-lysyl-[ribulose-1,5-bisphosphate carboxylase] + 3 S-adenosyl-L-methionine = N(6),N(6),N(6)-trimethyl-L-lysyl-[ribulose-1,5-bisphosphate carboxylase] + 3 S-adenosyl-L-homocysteine + 3 H(+). Methylates 'Lys-14' of the large subunit of RuBisCO. The protein is Ribulose-1,5 bisphosphate carboxylase/oxygenase large subunit N-methyltransferase, chloroplastic (RBCMT) of Nicotiana tabacum (Common tobacco).